The following is a 226-amino-acid chain: UPF0173 metal-dependent hydrolase GTNG_2675 (226 aa).

It belongs to the UPF0173 family.

This is UPF0173 metal-dependent hydrolase GTNG_2675 from Geobacillus thermodenitrificans (strain NG80-2).